We begin with the raw amino-acid sequence, 62 residues long: Photosystem II reaction center protein Z (62 aa).

2 consecutive transmembrane segments (helical) span residues 8–28 and 41–61; these read TLFALIAVSFLLVIGVPVVFA and FSGVGIWFLLVFAVGILNSFV.

The protein belongs to the PsbZ family. As to quaternary structure, PSII is composed of 1 copy each of membrane proteins PsbA, PsbB, PsbC, PsbD, PsbE, PsbF, PsbH, PsbI, PsbJ, PsbK, PsbL, PsbM, PsbT, PsbY, PsbZ, Psb30/Ycf12, at least 3 peripheral proteins of the oxygen-evolving complex and a large number of cofactors. It forms dimeric complexes.

The protein localises to the plastid. The protein resides in the chloroplast thylakoid membrane. Functionally, may control the interaction of photosystem II (PSII) cores with the light-harvesting antenna, regulates electron flow through the 2 photosystem reaction centers. PSII is a light-driven water plastoquinone oxidoreductase, using light energy to abstract electrons from H(2)O, generating a proton gradient subsequently used for ATP formation. In Oltmannsiellopsis viridis (Marine flagellate), this protein is Photosystem II reaction center protein Z.